We begin with the raw amino-acid sequence, 135 residues long: Small ribosomal subunit protein uS11 (135 aa).

Residues 1-10 show a composition bias toward polar residues; the sequence is MPPKTRSQTG. Positions 1–28 are disordered; sequence MPPKTRSQTGAKKVRRKEKKNVAHGHAH. Residues 12–28 are compositionally biased toward basic residues; it reads KKVRRKEKKNVAHGHAH.

Belongs to the universal ribosomal protein uS11 family. Part of the 30S ribosomal subunit. Interacts with proteins S7 and S18. Binds to IF-3.

In terms of biological role, located on the platform of the 30S subunit, it bridges several disparate RNA helices of the 16S rRNA. Forms part of the Shine-Dalgarno cleft in the 70S ribosome. This chain is Small ribosomal subunit protein uS11, found in Acidothermus cellulolyticus (strain ATCC 43068 / DSM 8971 / 11B).